The following is a 125-amino-acid chain: Small ribosomal subunit protein uS12 (125 aa).

The disordered stretch occupies residues 9–31; sequence RQGREVEKIKSKSPAMENSPQRR. The residue at position 89 (Asp89) is a 3-methylthioaspartic acid.

This sequence belongs to the universal ribosomal protein uS12 family. In terms of assembly, part of the 30S ribosomal subunit. Contacts proteins S8 and S17. May interact with IF1 in the 30S initiation complex.

Its function is as follows. With S4 and S5 plays an important role in translational accuracy. In terms of biological role, interacts with and stabilizes bases of the 16S rRNA that are involved in tRNA selection in the A site and with the mRNA backbone. Located at the interface of the 30S and 50S subunits, it traverses the body of the 30S subunit contacting proteins on the other side and probably holding the rRNA structure together. The combined cluster of proteins S8, S12 and S17 appears to hold together the shoulder and platform of the 30S subunit. This is Small ribosomal subunit protein uS12 from Verminephrobacter eiseniae (strain EF01-2).